The following is a 485-amino-acid chain: Glutamyl-tRNA(Gln) amidotransferase subunit A (485 aa).

Residues K79 and S154 each act as charge relay system in the active site. The Acyl-ester intermediate role is filled by S178.

It belongs to the amidase family. GatA subfamily. As to quaternary structure, heterotrimer of A, B and C subunits.

It carries out the reaction L-glutamyl-tRNA(Gln) + L-glutamine + ATP + H2O = L-glutaminyl-tRNA(Gln) + L-glutamate + ADP + phosphate + H(+). Allows the formation of correctly charged Gln-tRNA(Gln) through the transamidation of misacylated Glu-tRNA(Gln) in organisms which lack glutaminyl-tRNA synthetase. The reaction takes place in the presence of glutamine and ATP through an activated gamma-phospho-Glu-tRNA(Gln). The sequence is that of Glutamyl-tRNA(Gln) amidotransferase subunit A from Clostridium botulinum (strain Alaska E43 / Type E3).